We begin with the raw amino-acid sequence, 120 residues long: Large ribosomal subunit protein uL18 (120 aa).

The segment at 1–22 (MITKTSKNAARQKRHARVRAKL) is disordered. A compositionally biased stretch (basic residues) spans 10 to 20 (ARQKRHARVRA).

Belongs to the universal ribosomal protein uL18 family. As to quaternary structure, part of the 50S ribosomal subunit; part of the 5S rRNA/L5/L18/L25 subcomplex. Contacts the 5S and 23S rRNAs.

Functionally, this is one of the proteins that bind and probably mediate the attachment of the 5S RNA into the large ribosomal subunit, where it forms part of the central protuberance. In Bacillus velezensis (strain DSM 23117 / BGSC 10A6 / LMG 26770 / FZB42) (Bacillus amyloliquefaciens subsp. plantarum), this protein is Large ribosomal subunit protein uL18.